The chain runs to 636 residues: Multicopper oxidase CTB12 (636 aa).

Residues 1–23 (MWSVRLYPLALTLLFQCVSPAAA) form the signal peptide. In terms of domain architecture, Plastocyanin-like 1 spans 62–168 (AGIGFREAIF…LYGAVVIAPD (107 aa)). Residues histidine 104 and histidine 106 each contribute to the Cu cation site. N-linked (GlcNAc...) asparagine glycosylation is present at asparagine 136. The Cu cation site is built by histidine 148 and histidine 150. Asparagine 304 carries an N-linked (GlcNAc...) asparagine glycan. The region spanning 318–381 (LTFVNPGGLY…QEKARHVVRV (64 aa)) is the Plastocyanin-like 2 domain. Asparagine 472 carries N-linked (GlcNAc...) asparagine glycosylation. The Plastocyanin-like 3 domain maps to 486-613 (NVEDVPATEL…GGMGMVVLDG (128 aa)). Residues histidine 519, histidine 522, and histidine 524 each coordinate Cu cation. Residue asparagine 576 is glycosylated (N-linked (GlcNAc...) asparagine). Positions 595, 596, 597, and 601 each coordinate Cu cation.

The protein belongs to the multicopper oxidase family.

It functions in the pathway mycotoxin biosynthesis. Its function is as follows. Multicopper oxidase; part of the gene cluster that mediates the biosynthesis of cercosporin, a light-activated, non-host-selective toxin. The perylenequinone chromophore of cercosporin absorbs light energy to attain an electronically-activated triplet state and produces active oxygen species such as the hydroxyl radical, superoxide, hydrogen peroxide or singlet oxygen upon reaction with oxygen molecules. These reactive oxygen species cause damage to various cellular components including lipids, proteins and nucleic acids. The first step of cercosporin biosynthesis is performed by the polyketide synthase CTB1 which catalyzes the formation of nor-toralactone. The starter unit acyltransferase (SAT) domain of CTB1 initiates polyketide extension by the selective utilization of acetyl-CoA, which is elongated to the heptaketide in the beta-ketoacyl synthase (KS) domain by successive condensations with six malonyl units introduced by the malonyl acyltransferase (MAT) domain. The product template (PT) domain catalyzes C4-C9 and C2-C11 aldol cyclizations and dehydrations to a trihydroxynaphthalene, which is thought to be delivered to the thioesterase (TE) domain for product release. The bifunctional enzyme CTB3 then methylates nor-toralactone to toralactone before conducting an unusual oxidative aromatic ring opening. The O-methyltransferase CTB2 further methylates the nascent OH-6 of the CBT3 product, blocking further oxidation at this site before the reductase CTB6 reduces the 2-oxopropyl ketone at position C7, giving naphthalene. The FAD-dependent monooxygenase CTB5 in concert with the multicopper oxidase CTB12 are responsible for homodimerization of naphthalene with CTB7 installing the dioxepine moiety, finally producing cercosporin. The fasciclin domain-containing protein CTB11 might act with CTB5 and CTB12 whereas the roles of CTB9 and CTB10 have still to be elucidated. The protein is Multicopper oxidase CTB12 of Cercospora beticola (Sugarbeet leaf spot fungus).